The primary structure comprises 230 residues: Biosynthetic peptidoglycan transglycosylase (230 aa).

Residues 11-31 (VLLVLVALFVLYQLWIFTLVL) form a helical membrane-spanning segment.

This sequence belongs to the glycosyltransferase 51 family.

It localises to the cell inner membrane. It carries out the reaction [GlcNAc-(1-&gt;4)-Mur2Ac(oyl-L-Ala-gamma-D-Glu-L-Lys-D-Ala-D-Ala)](n)-di-trans,octa-cis-undecaprenyl diphosphate + beta-D-GlcNAc-(1-&gt;4)-Mur2Ac(oyl-L-Ala-gamma-D-Glu-L-Lys-D-Ala-D-Ala)-di-trans,octa-cis-undecaprenyl diphosphate = [GlcNAc-(1-&gt;4)-Mur2Ac(oyl-L-Ala-gamma-D-Glu-L-Lys-D-Ala-D-Ala)](n+1)-di-trans,octa-cis-undecaprenyl diphosphate + di-trans,octa-cis-undecaprenyl diphosphate + H(+). It participates in cell wall biogenesis; peptidoglycan biosynthesis. Functionally, peptidoglycan polymerase that catalyzes glycan chain elongation from lipid-linked precursors. The protein is Biosynthetic peptidoglycan transglycosylase of Aromatoleum aromaticum (strain DSM 19018 / LMG 30748 / EbN1) (Azoarcus sp. (strain EbN1)).